The primary structure comprises 134 residues: MASVIGYYGTGRRKTAVARVYLRPGDGKVKVNGKEYESLNDYFKNIAWTKHAIEPLEVTNTIGKFDLVIRVNGGGLSGQAGAVRLGIARALLQYDENLKPVLKKYKMLTRDPREVERKKYGLKKARRAPQFSKR.

The tract at residues 114–134 is disordered; it reads EVERKKYGLKKARRAPQFSKR. The span at 120 to 134 shows a compositional bias: basic residues; that stretch reads YGLKKARRAPQFSKR.

It belongs to the universal ribosomal protein uS9 family.

In Thermotoga neapolitana (strain ATCC 49049 / DSM 4359 / NBRC 107923 / NS-E), this protein is Small ribosomal subunit protein uS9.